A 338-amino-acid chain; its full sequence is Glycerol-3-phosphate dehydrogenase [NAD(P)+] (338 aa).

NADPH contacts are provided by S13, W14, and K108. Sn-glycerol 3-phosphate-binding residues include K108, G139, and S141. A143 serves as a coordination point for NADPH. Sn-glycerol 3-phosphate contacts are provided by K194, D247, S257, R258, and N259. K194 (proton acceptor) is an active-site residue. R258 contacts NADPH. NADPH-binding residues include V282 and E284.

Belongs to the NAD-dependent glycerol-3-phosphate dehydrogenase family.

It is found in the cytoplasm. It carries out the reaction sn-glycerol 3-phosphate + NAD(+) = dihydroxyacetone phosphate + NADH + H(+). The enzyme catalyses sn-glycerol 3-phosphate + NADP(+) = dihydroxyacetone phosphate + NADPH + H(+). The protein operates within membrane lipid metabolism; glycerophospholipid metabolism. Functionally, catalyzes the reduction of the glycolytic intermediate dihydroxyacetone phosphate (DHAP) to sn-glycerol 3-phosphate (G3P), the key precursor for phospholipid synthesis. The protein is Glycerol-3-phosphate dehydrogenase [NAD(P)+] of Listeria monocytogenes serotype 4a (strain HCC23).